A 337-amino-acid chain; its full sequence is Holliday junction branch migration complex subunit RuvB (337 aa).

The segment at 1 to 182 (MSEEKSVLRD…FGAVFRLSYY (182 aa)) is large ATPase domain (RuvB-L). ATP contacts are provided by residues Leu21, Arg22, Gly63, Lys66, Thr67, Thr68, 129–131 (EDY), Arg172, Tyr182, and Arg219. Thr67 lines the Mg(2+) pocket. The segment at 183-253 (KLEEIKQIVR…ITQLALTKLG (71 aa)) is small ATPAse domain (RuvB-S). The interval 256-337 (HKGLDASDYL…VKYYKGLLDN (82 aa)) is head domain (RuvB-H). DNA is bound by residues Arg311 and Arg316.

Belongs to the RuvB family. Homohexamer. Forms an RuvA(8)-RuvB(12)-Holliday junction (HJ) complex. HJ DNA is sandwiched between 2 RuvA tetramers; dsDNA enters through RuvA and exits via RuvB. An RuvB hexamer assembles on each DNA strand where it exits the tetramer. Each RuvB hexamer is contacted by two RuvA subunits (via domain III) on 2 adjacent RuvB subunits; this complex drives branch migration. In the full resolvosome a probable DNA-RuvA(4)-RuvB(12)-RuvC(2) complex forms which resolves the HJ.

The protein localises to the cytoplasm. The enzyme catalyses ATP + H2O = ADP + phosphate + H(+). Functionally, the RuvA-RuvB-RuvC complex processes Holliday junction (HJ) DNA during genetic recombination and DNA repair, while the RuvA-RuvB complex plays an important role in the rescue of blocked DNA replication forks via replication fork reversal (RFR). RuvA specifically binds to HJ cruciform DNA, conferring on it an open structure. The RuvB hexamer acts as an ATP-dependent pump, pulling dsDNA into and through the RuvAB complex. RuvB forms 2 homohexamers on either side of HJ DNA bound by 1 or 2 RuvA tetramers; 4 subunits per hexamer contact DNA at a time. Coordinated motions by a converter formed by DNA-disengaged RuvB subunits stimulates ATP hydrolysis and nucleotide exchange. Immobilization of the converter enables RuvB to convert the ATP-contained energy into a lever motion, pulling 2 nucleotides of DNA out of the RuvA tetramer per ATP hydrolyzed, thus driving DNA branch migration. The RuvB motors rotate together with the DNA substrate, which together with the progressing nucleotide cycle form the mechanistic basis for DNA recombination by continuous HJ branch migration. Branch migration allows RuvC to scan DNA until it finds its consensus sequence, where it cleaves and resolves cruciform DNA. This Acholeplasma laidlawii (strain PG-8A) protein is Holliday junction branch migration complex subunit RuvB.